A 129-amino-acid chain; its full sequence is Large ribosomal subunit protein bL12 (129 aa).

It belongs to the bacterial ribosomal protein bL12 family. In terms of assembly, homodimer. Part of the ribosomal stalk of the 50S ribosomal subunit. Forms a multimeric L10(L12)X complex, where L10 forms an elongated spine to which 2 to 4 L12 dimers bind in a sequential fashion. Binds GTP-bound translation factors.

Functionally, forms part of the ribosomal stalk which helps the ribosome interact with GTP-bound translation factors. Is thus essential for accurate translation. This Synechococcus sp. (strain CC9605) protein is Large ribosomal subunit protein bL12.